The sequence spans 126 residues: Holo-[acyl-carrier-protein] synthase (126 aa).

Residues aspartate 9 and glutamate 58 each contribute to the Mg(2+) site.

The protein belongs to the P-Pant transferase superfamily. AcpS family. The cofactor is Mg(2+).

Its subcellular location is the cytoplasm. The catalysed reaction is apo-[ACP] + CoA = holo-[ACP] + adenosine 3',5'-bisphosphate + H(+). In terms of biological role, transfers the 4'-phosphopantetheine moiety from coenzyme A to a Ser of acyl-carrier-protein. The protein is Holo-[acyl-carrier-protein] synthase of Salmonella paratyphi B (strain ATCC BAA-1250 / SPB7).